Consider the following 250-residue polypeptide: Small ribosomal subunit protein uS2 (250 aa).

This sequence belongs to the universal ribosomal protein uS2 family.

The polypeptide is Small ribosomal subunit protein uS2 (Polaromonas sp. (strain JS666 / ATCC BAA-500)).